Reading from the N-terminus, the 1238-residue chain is ATP-dependent helicase/nuclease subunit A (1238 aa).

The 469-residue stretch at 6 to 474 folds into the UvrD-like helicase ATP-binding domain; it reads TKWTETQKSA…IKLSENFRSR (469 aa). 27-34 contacts ATP; sequence AGAGTGKT. In terms of domain architecture, UvrD-like helicase C-terminal spans 512-811; sequence PFEGNCGGDV…RIMSIHKSKG (300 aa).

It belongs to the helicase family. AddA subfamily. As to quaternary structure, heterodimer of AddA and AddB/RexB. Mg(2+) serves as cofactor.

The catalysed reaction is Couples ATP hydrolysis with the unwinding of duplex DNA by translocating in the 3'-5' direction.. It carries out the reaction ATP + H2O = ADP + phosphate + H(+). Its function is as follows. The heterodimer acts as both an ATP-dependent DNA helicase and an ATP-dependent, dual-direction single-stranded exonuclease. Recognizes the chi site generating a DNA molecule suitable for the initiation of homologous recombination. The AddA nuclease domain is required for chi fragment generation; this subunit has the helicase and 3' -&gt; 5' nuclease activities. This Clostridium kluyveri (strain NBRC 12016) protein is ATP-dependent helicase/nuclease subunit A.